A 123-amino-acid chain; its full sequence is Transmembrane protein 80 (123 aa).

Transmembrane regions (helical) follow at residues 2-22 (LFHL…LMIV), 35-55 (LALD…QLYL), 68-88 (LAAS…FLLW), and 102-122 (VLLV…ADFI).

It is found in the membrane. It localises to the cell projection. The protein resides in the cilium. This Mus musculus (Mouse) protein is Transmembrane protein 80 (Tmem80).